The primary structure comprises 327 residues: Phenylalanine--tRNA ligase alpha subunit (327 aa).

E252 serves as a coordination point for Mg(2+).

This sequence belongs to the class-II aminoacyl-tRNA synthetase family. Phe-tRNA synthetase alpha subunit type 1 subfamily. Tetramer of two alpha and two beta subunits. Mg(2+) is required as a cofactor.

The protein resides in the cytoplasm. The catalysed reaction is tRNA(Phe) + L-phenylalanine + ATP = L-phenylalanyl-tRNA(Phe) + AMP + diphosphate + H(+). The polypeptide is Phenylalanine--tRNA ligase alpha subunit (Shigella dysenteriae serotype 1 (strain Sd197)).